A 254-amino-acid chain; its full sequence is Phosphoribosylaminoimidazole-succinocarboxamide synthase (254 aa).

Belongs to the SAICAR synthetase family.

The enzyme catalyses 5-amino-1-(5-phospho-D-ribosyl)imidazole-4-carboxylate + L-aspartate + ATP = (2S)-2-[5-amino-1-(5-phospho-beta-D-ribosyl)imidazole-4-carboxamido]succinate + ADP + phosphate + 2 H(+). It participates in purine metabolism; IMP biosynthesis via de novo pathway; 5-amino-1-(5-phospho-D-ribosyl)imidazole-4-carboxamide from 5-amino-1-(5-phospho-D-ribosyl)imidazole-4-carboxylate: step 1/2. The chain is Phosphoribosylaminoimidazole-succinocarboxamide synthase from Brucella anthropi (strain ATCC 49188 / DSM 6882 / CCUG 24695 / JCM 21032 / LMG 3331 / NBRC 15819 / NCTC 12168 / Alc 37) (Ochrobactrum anthropi).